The primary structure comprises 1045 residues: Protein madd-4 (1045 aa).

The N-terminal stretch at 1 to 23 (MKCSYTVVFLLFYLLIASFHVDA) is a signal peptide. 5 TSP type-1 domains span residues 24–71 (LSWA…KTCE), 236–292 (RCRW…NCVS), 294–510 (SCGR…HPCP), 512–572 (FWLT…NVVA), and 576–635 (TWVT…GSCS). Disulfide bonds link Cys-35/Cys-65, Cys-39/Cys-70, and Cys-50/Cys-55. N-linked (GlcNAc...) asparagine glycans are attached at residues Asn-268 and Asn-280. Positions 637-732 (PELLSNRVFE…FTDRLQGNVT (96 aa)) constitute an Ig-like C2-type domain. A disulfide bridge links Cys-674 with Cys-722. N-linked (GlcNAc...) asparagine glycans are attached at residues Asn-730 and Asn-781. In terms of domain architecture, TSP type-1 6 spans 811 to 873 (RWDIGHWSEC…TRPCHREDCP (63 aa)). 2 N-linked (GlcNAc...) asparagine glycosylation sites follow: Asn-899 and Asn-906. The 59-residue stretch at 932–990 (CKAEWRTSDWGSCSSECGTGGVQLRLLSCVWISSGRPAGRNCEQMRRPHSARACVADEP) folds into the TSP type-1 7 domain. Residues 1004–1041 (RDASCQDQSRFCDIIKLFHSCDSLEVRQKCCSTCTFVE) enclose the PLAC domain.

As to quaternary structure, interacts with eva-1 (via the SUEL-type lectin domain). Interacts with unc-5. Interacts with unc-40; the interaction is required for the localization of unc-40 to postsynaptic domains. Isoform a forms homodimers and heterodimers with isoform b. Isoform b forms homodimers and heterodimers with isoform a. Isoform b interacts with nlg-1 (via extracellular domain); the interaction is required for nlg-1 localization to postsynaptic domains. Isoform b interacts (via the Ig-like C2-type domain) with nrx-1 (via C-terminus). Isoform a: Expressed in the commissural GABAergic and cholinergic motor neurons in the first larval stage but only in the cholinergic motor neurons in later larval stages and in adult animals. At the L1 larval stage, mainly localized at the nerve ring and at the dorsal cord. Isoform b: Expressed in the commissural GABAergic and cholinergic motor neurons whose cell bodies reside in the ventral nerve cord and which extend axons into the ventral and dorsal nerve cord. Also expressed in the head neurons RIA, RIC, lateral IL1s, lateral IL2s, OLLs, RMEs and SABs, all of which extend axons into the nerve ring. Expressed in the embryogenic blast cells and the corresponding terminally differentiated ventral cord motor neurons and head neurons.

Its subcellular location is the cell projection. The protein localises to the axon. It is found in the secreted. The protein resides in the synapse. It localises to the extracellular space. Its subcellular location is the extracellular matrix. Functionally, component of an extracellular matrix cue that is involved in the guidance of dorsoventral midline migrations and in the specification of postsynaptic domains at neuromuscular junctions (NMJs). Acts as a ligand for the netrin receptor unc-40 and the neuroligin receptor nlg-1. Secreted by the dorsal and ventral nerve cords to attract sensory axons and muscle membrane extensions called muscle arms. In parallel with unc-6 and slt-1, involved in the netrin receptor unc-40 dependent guidance of the AVM and PVM mechanosensory axons along the dorsal-ventral axis. The unc-40 coreceptor eva-1 is enhancing the responsiveness of unc-40 to the madd-4 guidance cue to attract the muscle arm extensions and AVM mechanosensory axons towards the dorsoventral midline. Acts as a synaptic organizer and is required for the specification of inhibitory GABAergic and excitatory cholinergic identities of postsynaptic domains at neuromuscular junctions (NMJs). Required for the recruitment of unc-40 to both cholinergic and GABAergic NMJs. Promotes the clustering of ACh receptors and GABA(A) receptors at postsynaptic sites during synaptogenesis. The binding to the presynaptic adhesion protein nrx-1 and to the neuroligin nlg-1 at postsynaptic sites promotes clustering of GABAergic receptors at postsynaptic NMJs, thereby contributing to normal GABAergic synaptic transmission. Isoform a and isoform c: Promotes the clustering of acetylcholine receptors (AChR) at excitatory cholinergic synapses of NMJs via the netrin receptor unc-40. Its function is as follows. Acts as a guidance cue in the attraction of muscle membrane extensions (muscle arms) to the dorsal cord and in cooperation with unc-6 to the ventral cord via the netrin receptor unc-40 and via the unc-40 coreceptor eva-1. Together with nrx-1, clusters netrin receptor unc-40 and neuroligin nlg-1 at postsynaptic sites of GABAergic NMJs, thereby promoting the recruitment of GABA(A) receptors at GABAergic synapses. Prevents the recruitment of GABAergic receptors to cholinergic synapses. The sequence is that of Protein madd-4 from Caenorhabditis elegans.